We begin with the raw amino-acid sequence, 308 residues long: Cell division protein ZipA (308 aa).

Topologically, residues 1–5 are periplasmic; that stretch reads MQELR. Residues 6–26 traverse the membrane as a helical segment; the sequence is LVLILVGALAIAALLFHGLWT. At 27 to 308 the chain is on the cytoplasmic side; sequence SRKETSSKFG…YKQRVKVFCN (282 aa). The tract at residues 43–90 is disordered; the sequence is FDSESEDEQPTPARGFEQPKESVVDVRQERKEPAFGRDEPNLSQDPLF. The segment covering 59-82 has biased composition (basic and acidic residues); sequence EQPKESVVDVRQERKEPAFGRDEP.

The protein belongs to the ZipA family. Interacts with FtsZ via their C-terminal domains.

Its subcellular location is the cell inner membrane. In terms of biological role, essential cell division protein that stabilizes the FtsZ protofilaments by cross-linking them and that serves as a cytoplasmic membrane anchor for the Z ring. Also required for the recruitment to the septal ring of downstream cell division proteins. This is Cell division protein ZipA from Aliivibrio salmonicida (strain LFI1238) (Vibrio salmonicida (strain LFI1238)).